The chain runs to 746 residues: Methyl-CpG-binding domain-containing protein 13 (746 aa).

2 short sequence motifs (nuclear localization signal) span residues 13-20 (ERKVEIRV) and 44-51 (IKKLEITN). Positions 29 to 104 (VIVEKSAAQG…KESDIEDDDS (76 aa)) constitute an MBD domain. Disordered stretches follow at residues 131-157 (IDDV…MTSD), 169-283 (LGKK…PTPE), 295-328 (PLDD…KTRT), 348-479 (TKVQ…LKSP), 518-562 (TAAG…SGSA), and 696-746 (EPDT…FSKD). Residues 169–180 (LGKKEEVKDPIE) show a composition bias toward basic and acidic residues. The span at 190 to 199 (RSQTKASTTE) shows a compositional bias: polar residues. The span at 244 to 260 (SSEKRITRSKVEEKKNE) shows a compositional bias: basic and acidic residues. A Nuclear localization signal motif is present at residues 256 to 263 (EKKNELSN). Over residues 427–451 (VAQSCNEQSSQKPHAAAATSNNRVS) the composition is skewed to polar residues. The span at 465–476 (VGRKPSKDKKTL) shows a compositional bias: basic residues. Composition is skewed to polar residues over residues 529–546 (PKAN…SPLR) and 702–730 (KSQG…TNKT). Positions 732-746 (GKPDDLRFTQSFSKD) are enriched in basic and acidic residues.

The protein resides in the nucleus. In terms of biological role, probable transcriptional regulator. This chain is Methyl-CpG-binding domain-containing protein 13 (MBD13), found in Arabidopsis thaliana (Mouse-ear cress).